The chain runs to 261 residues: uncharacterized protein (261 aa).

Residue 22-46 (IVTGGNSGLGQAFAMALAKAGANIF) coordinates NADP(+). Ser153 serves as a coordination point for substrate. Tyr166 functions as the Proton acceptor in the catalytic mechanism.

Belongs to the short-chain dehydrogenases/reductases (SDR) family.

This is an uncharacterized protein from Escherichia coli (strain K12).